A 242-amino-acid chain; its full sequence is Caffeoyl-CoA O-methyltransferase 4 (242 aa).

Lysine 16 provides a ligand contact to substrate. S-adenosyl-L-methionine-binding positions include threonine 58, glutamate 80, 82–83 (GV), serine 88, aspartate 106, and alanine 135. Residue aspartate 158 coordinates substrate. Residue aspartate 158 participates in a divalent metal cation binding. S-adenosyl-L-methionine is bound at residue aspartate 160. Residues aspartate 184 and asparagine 185 each coordinate a divalent metal cation. Asparagine 189 provides a ligand contact to substrate.

Belongs to the class I-like SAM-binding methyltransferase superfamily. Cation-dependent O-methyltransferase family. CCoAMT subfamily. The cofactor is Mg(2+). In terms of tissue distribution, mostly expressed in the bottom and middle parts of the stems.

It carries out the reaction (E)-caffeoyl-CoA + S-adenosyl-L-methionine = (E)-feruloyl-CoA + S-adenosyl-L-homocysteine + H(+). The protein operates within aromatic compound metabolism; phenylpropanoid biosynthesis. Methylates caffeoyl-CoA to feruloyl-CoA and 5-hydroxyferuloyl-CoA to sinapoyl-CoA. Plays a role in the synthesis of feruloylated polysaccharides. Involved in the reinforcement of the plant cell wall. Also involved in the responding to wounding or pathogen challenge by the increased formation of cell wall-bound ferulic acid polymers. The polypeptide is Caffeoyl-CoA O-methyltransferase 4 (CCOAOMT4) (Nicotiana tabacum (Common tobacco)).